We begin with the raw amino-acid sequence, 633 residues long: RpoH suppressor (633 aa).

The 400-residue stretch at 11–410 (LVMKGGITSG…SSNFPIHLFD (400 aa)) folds into the PNPLA domain. The next 3 helical transmembrane spans lie at 38–58 (NIGG…AAVG), 133–153 (IAPV…YAVG), and 159–179 (IAAA…FAVL). Residues 41 to 45 (GTSAG) carry the GXSXG motif. Ser43 functions as the Nucleophile in the catalytic mechanism. The tract at residues 342-380 (ARRESLPGSDGENEAEDTTSDEDEQKTVLDSTEALTTGG) is disordered. The span at 352–365 (GENEAEDTTSDEDE) shows a compositional bias: acidic residues. Residue Asp397 is the Proton acceptor of the active site. The DGA/G motif lies at 397–399 (DGG). Positions 605 to 624 (EGEKWSGEGPDLTKTAPRPL) are disordered.

It is found in the cell membrane. This protein is non-essential for R.meliloti growth, but induces a heat-shock response in temperature-sensitive E.coli K165 by elevating levels of sigma 32 (mechanism unknown). The polypeptide is RpoH suppressor (suhR) (Rhizobium meliloti (strain 1021) (Ensifer meliloti)).